The following is a 359-amino-acid chain: Putative nucleotidyltransferase MAB21L1 (359 aa).

A ribonucleoside 5'-triphosphate-binding positions include 23-24 (RK) and 63-66 (YEGL). Residues Glu-73 and Glu-75 each contribute to the Mg(2+) site. Residues Lys-248 and 252–255 (SLLK) contribute to the a ribonucleoside 5'-triphosphate site.

This sequence belongs to the mab-21 family. As to quaternary structure, monomer. Homodecamer; composed of 2 back to back homopentamers. The protein may exist as monomer in solution and oiligomerizes upon ligand binding.

The protein localises to the nucleus. Functionally, putative nucleotidyltransferase required for several aspects of embryonic development including normal development of the eye. It is unclear whether it displays nucleotidyltransferase activity in vivo. Binds single-stranded RNA (ssRNA). This chain is Putative nucleotidyltransferase MAB21L1 (mab21l1), found in Xenopus tropicalis (Western clawed frog).